A 552-amino-acid polypeptide reads, in one-letter code: Glutamine--tRNA ligase (552 aa).

The short motif at 33 to 43 (PEPNGYLHIGH) is the 'HIGH' region element. ATP is bound by residues 34–36 (EPN) and 40–46 (HIGHAKS). L-glutamine-binding residues include Asp-66 and Tyr-210. ATP-binding positions include Thr-229, 259–260 (RL), and 267–269 (MSK). A 'KMSKS' region motif is present at residues 266-270 (VMSKR).

Belongs to the class-I aminoacyl-tRNA synthetase family. As to quaternary structure, monomer.

It localises to the cytoplasm. It catalyses the reaction tRNA(Gln) + L-glutamine + ATP = L-glutaminyl-tRNA(Gln) + AMP + diphosphate. The sequence is that of Glutamine--tRNA ligase from Clostridium perfringens (strain ATCC 13124 / DSM 756 / JCM 1290 / NCIMB 6125 / NCTC 8237 / Type A).